We begin with the raw amino-acid sequence, 359 residues long: tRNA-specific 2-thiouridylase MnmA (359 aa).

ATP contacts are provided by residues Ala6 to Ser13 and Leu32. Cys97 acts as the Nucleophile in catalysis. Cys97 and Cys195 are disulfide-bonded. Position 121 (Gly121) interacts with ATP. The interval Lys144 to Gln146 is interaction with tRNA. The active-site Cysteine persulfide intermediate is Cys195.

Belongs to the MnmA/TRMU family.

It is found in the cytoplasm. It catalyses the reaction S-sulfanyl-L-cysteinyl-[protein] + uridine(34) in tRNA + AH2 + ATP = 2-thiouridine(34) in tRNA + L-cysteinyl-[protein] + A + AMP + diphosphate + H(+). Catalyzes the 2-thiolation of uridine at the wobble position (U34) of tRNA, leading to the formation of s(2)U34. This chain is tRNA-specific 2-thiouridylase MnmA, found in Tropheryma whipplei (strain Twist) (Whipple's bacillus).